An 81-amino-acid polypeptide reads, in one-letter code: UPF0298 protein SAK_1599 (81 aa).

It belongs to the UPF0298 family.

Its subcellular location is the cytoplasm. The chain is UPF0298 protein SAK_1599 from Streptococcus agalactiae serotype Ia (strain ATCC 27591 / A909 / CDC SS700).